A 141-amino-acid chain; its full sequence is Small ribosomal subunit protein uS19 (141 aa).

It belongs to the universal ribosomal protein uS19 family.

Its function is as follows. Protein S19 forms a complex with S13 that binds strongly to the 16S ribosomal RNA. The polypeptide is Small ribosomal subunit protein uS19 (Halorubrum lacusprofundi (strain ATCC 49239 / DSM 5036 / JCM 8891 / ACAM 34)).